The chain runs to 51 residues: Large ribosomal subunit protein eL39 (51 aa).

The tract at residues 32 to 51 is disordered; it reads KRRVTRSPTRRHWRRVKLKA.

The protein belongs to the eukaryotic ribosomal protein eL39 family.

This chain is Large ribosomal subunit protein eL39, found in Pyrobaculum arsenaticum (strain DSM 13514 / JCM 11321 / PZ6).